Here is a 113-residue protein sequence, read N- to C-terminus: U11-theraphotoxin-Hhn1m (113 aa).

Residues 1–21 form the signal peptide; that stretch reads MNTVRGTFLLVFGLAASLGQA. The propeptide occupies 22-74; that stretch reads DKNENRREMQKKTEQGKSYLNFAENLLLQKLEELEAKLLEKHSKKSKNSRQKR. 3 disulfides stabilise this stretch: C75/C90, C82/C95, and C89/C110.

This sequence belongs to the neurotoxin 14 (magi-1) family. 01 (HNTX-16) subfamily. As to expression, expressed by the venom gland.

The protein localises to the secreted. In terms of biological role, probable ion channel inhibitor. The protein is U11-theraphotoxin-Hhn1m of Cyriopagopus hainanus (Chinese bird spider).